Here is a 381-residue protein sequence, read N- to C-terminus: MTETQSLELAKALISRPSVTPDDRDCQKLLVERLYKIGFAAEELHFGDTKNIWLRRGTKVPVVCFAGHTDVVPTGPVEKWDSPPFEPTERDGRLYGRGAADMKTSIACFVTACERFVAEHPDHQGSIALLITSDEEGDALDGTTKVVDVLKARGELIDYCIVGEPTAVDKLGDMIKNGRRGSLSGNLTVKGKQGHIAYPHLAINPVHTFAPALLELTQEVWDEGNKYFPPTSFQISNINGGTGATNVIPGELNVKFNFRFSTESTEAGLKQRVHAILDKHGVQYDLQWSCSGQPFLTQAGKLTDVARAAIAETCGIEAELSTTGGTSDGRFIKAIAKELIELGPSNATIHQINENVRLDDIPKLSAVYEGILARLLAGNAV.

A Zn(2+)-binding site is contributed by His68. Residue Asp70 is part of the active site. Asp101 is a Zn(2+) binding site. Residue Glu135 is the Proton acceptor of the active site. Glu136, Glu164, and His350 together coordinate Zn(2+).

Belongs to the peptidase M20A family. DapE subfamily. In terms of assembly, homodimer. Zn(2+) is required as a cofactor. The cofactor is Co(2+).

It catalyses the reaction N-succinyl-(2S,6S)-2,6-diaminopimelate + H2O = (2S,6S)-2,6-diaminopimelate + succinate. It participates in amino-acid biosynthesis; L-lysine biosynthesis via DAP pathway; LL-2,6-diaminopimelate from (S)-tetrahydrodipicolinate (succinylase route): step 3/3. Its function is as follows. Catalyzes the hydrolysis of N-succinyl-L,L-diaminopimelic acid (SDAP), forming succinate and LL-2,6-diaminopimelate (DAP), an intermediate involved in the bacterial biosynthesis of lysine and meso-diaminopimelic acid, an essential component of bacterial cell walls. The polypeptide is Succinyl-diaminopimelate desuccinylase (Neisseria meningitidis serogroup A / serotype 4A (strain DSM 15465 / Z2491)).